A 35-amino-acid polypeptide reads, in one-letter code: Photosystem II reaction center protein T (35 aa).

A helical transmembrane segment spans residues 3 to 23 (ALVYTFLLISTLGIIFFAIFF).

The protein belongs to the PsbT family. As to quaternary structure, PSII is composed of 1 copy each of membrane proteins PsbA, PsbB, PsbC, PsbD, PsbE, PsbF, PsbH, PsbI, PsbJ, PsbK, PsbL, PsbM, PsbT, PsbY, PsbZ, Psb30/Ycf12, at least 3 peripheral proteins of the oxygen-evolving complex and a large number of cofactors. It forms dimeric complexes.

Its subcellular location is the plastid. It is found in the chloroplast thylakoid membrane. In terms of biological role, found at the monomer-monomer interface of the photosystem II (PS II) dimer, plays a role in assembly and dimerization of PSII. PSII is a light-driven water plastoquinone oxidoreductase, using light energy to abstract electrons from H(2)O, generating a proton gradient subsequently used for ATP formation. This is Photosystem II reaction center protein T from Welwitschia mirabilis (Tree tumbo).